A 488-amino-acid polypeptide reads, in one-letter code: Annexin A7 (488 aa).

The span at 1–18 (MSYPGYPPTGYPPFPGYP) shows a compositional bias: pro residues. Disordered regions lie at residues 1 to 49 (MSYP…YPQV) and 71 to 150 (GYPG…NTES). The repeat-rich region stretch occupies residues 1–143 (MSYPGYPPTG…QYPGGQPTYP (143 aa)). The 3 X 5 AA tandem repeats of G-Y-P-P-X stretch occupies residues 5 to 20 (GYPPTGYPPFPGYPPA). The span at 89 to 102 (PGQGFGVPPGGAGF) shows a compositional bias: gly residues. 4 Annexin repeats span residues 185 to 256 (FDAM…ALFM), 257 to 328 (PPTY…SMCQ), 340 to 412 (QMAQ…TILQ), and 416 to 487 (NRPA…AIVG). Lys-233 bears the N6-acetyllysine mark.

Belongs to the annexin family. As to quaternary structure, interacts with PDCD6.

In terms of biological role, calcium/phospholipid-binding protein which promotes membrane fusion and is involved in exocytosis. This Macaca fascicularis (Crab-eating macaque) protein is Annexin A7 (ANXA7).